The chain runs to 132 residues: Small ribosomal subunit protein uS19 (132 aa).

Belongs to the universal ribosomal protein uS19 family.

Protein S19 forms a complex with S13 that binds strongly to the 16S ribosomal RNA. The polypeptide is Small ribosomal subunit protein uS19 (Korarchaeum cryptofilum (strain OPF8)).